Consider the following 536-residue polypeptide: Bifunctional purine biosynthesis protein PurH (536 aa).

The MGS-like domain maps to 8–158 (IPAPDEVRIK…KNHAYVTIVT (151 aa)).

Belongs to the PurH family.

It carries out the reaction (6R)-10-formyltetrahydrofolate + 5-amino-1-(5-phospho-beta-D-ribosyl)imidazole-4-carboxamide = 5-formamido-1-(5-phospho-D-ribosyl)imidazole-4-carboxamide + (6S)-5,6,7,8-tetrahydrofolate. The catalysed reaction is IMP + H2O = 5-formamido-1-(5-phospho-D-ribosyl)imidazole-4-carboxamide. It functions in the pathway purine metabolism; IMP biosynthesis via de novo pathway; 5-formamido-1-(5-phospho-D-ribosyl)imidazole-4-carboxamide from 5-amino-1-(5-phospho-D-ribosyl)imidazole-4-carboxamide (10-formyl THF route): step 1/1. It participates in purine metabolism; IMP biosynthesis via de novo pathway; IMP from 5-formamido-1-(5-phospho-D-ribosyl)imidazole-4-carboxamide: step 1/1. In Rhizobium meliloti (strain 1021) (Ensifer meliloti), this protein is Bifunctional purine biosynthesis protein PurH.